Reading from the N-terminus, the 168-residue chain is ATP synthase subunit b (168 aa).

Residues 9–29 (LFNLSTFVFTIINLLVLYYIL) form a helical membrane-spanning segment.

This sequence belongs to the ATPase B chain family. F-type ATPases have 2 components, F(1) - the catalytic core - and F(0) - the membrane proton channel. F(1) has five subunits: alpha(3), beta(3), gamma(1), delta(1), epsilon(1). F(0) has three main subunits: a(1), b(2) and c(10-14). The alpha and beta chains form an alternating ring which encloses part of the gamma chain. F(1) is attached to F(0) by a central stalk formed by the gamma and epsilon chains, while a peripheral stalk is formed by the delta and b chains.

Its subcellular location is the cell membrane. Functionally, f(1)F(0) ATP synthase produces ATP from ADP in the presence of a proton or sodium gradient. F-type ATPases consist of two structural domains, F(1) containing the extramembraneous catalytic core and F(0) containing the membrane proton channel, linked together by a central stalk and a peripheral stalk. During catalysis, ATP synthesis in the catalytic domain of F(1) is coupled via a rotary mechanism of the central stalk subunits to proton translocation. Component of the F(0) channel, it forms part of the peripheral stalk, linking F(1) to F(0). The polypeptide is ATP synthase subunit b (Caldanaerobacter subterraneus subsp. tengcongensis (strain DSM 15242 / JCM 11007 / NBRC 100824 / MB4) (Thermoanaerobacter tengcongensis)).